The following is a 59-amino-acid chain: Chromatin protein Cren7 (59 aa).

The protein belongs to the Cren7 family. In terms of assembly, monomer. Methylated at multiple sites, to varying extents.

It is found in the chromosome. It localises to the cytoplasm. Functionally, a chromatin protein, binds double-stranded DNA without sequence specificity. Constrains negative DNA supercoils. The polypeptide is Chromatin protein Cren7 (Pyrobaculum aerophilum (strain ATCC 51768 / DSM 7523 / JCM 9630 / CIP 104966 / NBRC 100827 / IM2)).